The chain runs to 122 residues: Large ribosomal subunit protein uL18 (122 aa).

Belongs to the universal ribosomal protein uL18 family. As to quaternary structure, part of the 50S ribosomal subunit; part of the 5S rRNA/L5/L18/L25 subcomplex. Contacts the 5S and 23S rRNAs.

In terms of biological role, this is one of the proteins that bind and probably mediate the attachment of the 5S RNA into the large ribosomal subunit, where it forms part of the central protuberance. In Geotalea uraniireducens (strain Rf4) (Geobacter uraniireducens), this protein is Large ribosomal subunit protein uL18.